Here is a 59-residue protein sequence, read N- to C-terminus: Small ribosomal subunit protein bS21 (59 aa).

A disordered region spans residues 36–59 (EHYEKPSVKRKKKAEAAKRNKSKF). The span at 43-59 (VKRKKKAEAAKRNKSKF) shows a compositional bias: basic residues.

It belongs to the bacterial ribosomal protein bS21 family.

The protein is Small ribosomal subunit protein bS21 of Alkaliphilus oremlandii (strain OhILAs) (Clostridium oremlandii (strain OhILAs)).